The primary structure comprises 619 residues: Eukaryotic translation initiation factor 2-alpha kinase 1 (619 aa).

Residues 1-40 are disordered; sequence MLGGSSVDGERDTDDDAAGAVAAPPAIDFPAEVSDPKYDE. Residues 18 to 28 show a composition bias toward low complexity; sequence AGAVAAPPAID. The short motif at 85–104 is the SIFI-degron element; the sequence is LHSKQVFKLLCQTFIKMGLL. A Protein kinase domain is found at 167-580; it reads FEELAILGKG…ALQLLQSELF (414 aa). ATP-binding positions include 173-181 and K196; that span reads LGKGGYGRV. T283 bears the Phosphothreonine mark. One copy of the HRM 1 repeat lies at 408 to 413; it reads ACPYVM. D440 (proton acceptor) is an active-site residue. Residues T483, T485, and T490 each carry the phosphothreonine; by autocatalysis modification. An HRM 2 repeat occupies 549 to 554; that stretch reads RCPVQA.

This sequence belongs to the protein kinase superfamily. Ser/Thr protein kinase family. GCN2 subfamily. As to quaternary structure, synthesized in an inactive form that binds to the N-terminal domain of CDC37. Has to be associated with a multiprotein complex containing Hsp90, CDC37 and PPP5C for maturation and activation by autophosphorylation. The phosphatase PPP5C modulates this activation. Homodimer; homodimerizes in presence of heme, forming a disulfide-linked inactive homodimer. Interacts with DELE1; binds both to full-length DELE1 and processed form of DELE1 (S-DELE1) in response to stress, leading to activate its protein kinase activity and trigger the integrated stress response (ISR). In terms of processing, activated by autophosphorylation; phosphorylated predominantly on serine and threonine residues, but also on tyrosine residues. Autophosphorylation at Thr-485 is required for kinase activation. The active autophosphorylated form apparently is largely refractory to cellular heme fluctuations. Post-translationally, ubiquitinated and degraded by the SIFI complex once the mitochondrial stress has been resolved, thereby providing stress response silencing. Within the SIFI complex, UBR4 initiates ubiquitin chain that are further elongated or branched by KCMF1. As to expression, expressed predominantly in erythroid cells, mature reticulocytes, as well as fetal liver nucleated erythroid cells. At much lower levels, expressed in hepatocytes and bone marrow-derived macrophages (at protein level).

It is found in the cytoplasm. The enzyme catalyses L-seryl-[protein] + ATP = O-phospho-L-seryl-[protein] + ADP + H(+). It catalyses the reaction L-threonyl-[protein] + ATP = O-phospho-L-threonyl-[protein] + ADP + H(+). Its activity is regulated as follows. In normal conditions, the protein kinase activity is inhibited; inhibition is relieved by various stress conditions. Inhibited by heme: in presence of heme, forms a disulfide-linked inactive homodimer. Heme depletion relieves inhibition and stimulates kinase activity by autophosphorylation. Inhibited by the heme metabolites biliverdin and bilirubin. Induced by oxidative stress generated by arsenite treatment. Binding of nitric oxide (NO) to the heme iron in the N-terminal heme-binding domain activates the kinase activity, while binding of carbon monoxide (CO) suppresses kinase activity. Protein kinase activity is also activated upon binding to DELE1 in response to various stress, triggering the integrated stress response (ISR): activated by full-length DELE1 in response to iron deficiency, while it is activated by the processed form of DELE1 (S-DELE1) in response to mitochondrial stress. Metabolic-stress sensing protein kinase that phosphorylates the alpha subunit of eukaryotic translation initiation factor 2 (EIF2S1/eIF-2-alpha) in response to various stress conditions. Key activator of the integrated stress response (ISR) required for adaptation to various stress, such as heme deficiency, oxidative stress, osmotic shock, mitochondrial dysfunction and heat shock. EIF2S1/eIF-2-alpha phosphorylation in response to stress converts EIF2S1/eIF-2-alpha in a global protein synthesis inhibitor, leading to a global attenuation of cap-dependent translation, while concomitantly initiating the preferential translation of ISR-specific mRNAs, such as the transcriptional activator ATF4, and hence allowing ATF4-mediated reprogramming. Acts as a key sensor of heme-deficiency: in normal conditions, binds hemin via a cysteine thiolate and histidine nitrogenous coordination, leading to inhibit the protein kinase activity. This binding occurs with moderate affinity, allowing it to sense the heme concentration within the cell: heme depletion relieves inhibition and stimulates kinase activity, activating the ISR. Thanks to this unique heme-sensing capacity, plays a crucial role to shut off protein synthesis during acute heme-deficient conditions. In red blood cells (RBCs), controls hemoglobin synthesis ensuring a coordinated regulation of the synthesis of its heme and globin moieties. It thereby plays an essential protective role for RBC survival in anemias of iron deficiency. Iron deficiency also triggers activation by full-length DELE1. Also activates the ISR in response to mitochondrial dysfunction: HRI/EIF2AK1 protein kinase activity is activated upon binding to the processed form of DELE1 (S-DELE1), thereby promoting the ATF4-mediated reprogramming. Also acts as an activator of mitophagy in response to mitochondrial damage: catalyzes phosphorylation of eIF-2-alpha (EIF2S1) following activation by S-DELE1, thereby promoting mitochondrial localization of EIF2S1, triggering PRKN-independent mitophagy. The chain is Eukaryotic translation initiation factor 2-alpha kinase 1 from Mus musculus (Mouse).